The primary structure comprises 396 residues: Elongation factor Tu (396 aa).

A tr-type G domain is found at 10-205 (KSHANIGTIG…AVDEYIPTPE (196 aa)). The interval 19–26 (GHVDHGKT) is G1. 19-26 (GHVDHGKT) is a GTP binding site. Threonine 26 is a Mg(2+) binding site. The G2 stretch occupies residues 61 to 65 (GITIS). Residues 82-85 (DCPG) are G3. GTP-binding positions include 82–86 (DCPGH) and 137–140 (NKCD). Residues 137-140 (NKCD) form a G4 region. The segment at 175-177 (SAL) is G5.

This sequence belongs to the TRAFAC class translation factor GTPase superfamily. Classic translation factor GTPase family. EF-Tu/EF-1A subfamily. As to quaternary structure, monomer.

The protein resides in the cytoplasm. It catalyses the reaction GTP + H2O = GDP + phosphate + H(+). Its function is as follows. GTP hydrolase that promotes the GTP-dependent binding of aminoacyl-tRNA to the A-site of ribosomes during protein biosynthesis. The sequence is that of Elongation factor Tu from Bacillus licheniformis (strain ATCC 14580 / DSM 13 / JCM 2505 / CCUG 7422 / NBRC 12200 / NCIMB 9375 / NCTC 10341 / NRRL NRS-1264 / Gibson 46).